The following is a 953-amino-acid chain: Anion exchange protein 4 (953 aa).

The tract at residues 20 to 41 (SEQLDGDLGPGSGLDGPSDIDN) is disordered. A run of 4 helical transmembrane segments spans residues 385–405 (AVLYIYLATVTNAITFGGLLG), 413–433 (GVLESFLGTAVAGATFCLMAG), 470–490 (VGIWVATFCLALVATEASLLV), and 501–521 (FCALISLIFIYDAVGKMLNLI). The interval 385-953 (AVLYIYLATV…KAPEINISVN (569 aa)) is membrane (anion exchange). N-linked (GlcNAc...) asparagine glycosylation is found at Asn-546 and Asn-570. 7 consecutive transmembrane segments (helical) span residues 594 to 614 (VPDIAFFSLLLFFTSFLCAIA), 635 to 655 (FSSVLAILLGCGLDAFLGLAT), 682 to 702 (PWWLSVAAALPALLLSILIFM), 728 to 748 (LFCVAVLMLFTSALGLPWYVS), 785 to 805 (GLVVFILTGVSIFLAPVLKFI), 807 to 827 (MPVLYGIFLYMGVAALSSMQF), and 869 to 889 (LWVIKSTPAAIVFPLMLLGLV). Residues 916-927 (KTIPENRPEPEH) are compositionally biased toward basic and acidic residues. A disordered region spans residues 916-938 (KTIPENRPEPEHLFSGNDSENSE). Asn-932 and Asn-949 each carry an N-linked (GlcNAc...) asparagine glycan.

This sequence belongs to the anion exchanger (TC 2.A.31) family. Expressed in kidney and gastrointestinal tract. In kidney, it is highly expressed in the cortex, expressed at intermediate level in the outer medulla and not expressed in the inner medulla. It is expressed in the cecum, while it is absent in other segments of gastrointestinal tract. Highly expressed in the cortical collecting duct (CCD). Expressed in both alpha-intercalated cells and beta-intercalated cells in the CCD (at protein level).

Its subcellular location is the basolateral cell membrane. The catalysed reaction is 2 hydrogencarbonate(out) + chloride(in) + Na(+)(out) = 2 hydrogencarbonate(in) + chloride(out) + Na(+)(in). It carries out the reaction K(+)(in) + 2 hydrogencarbonate(in) + chloride(out) = K(+)(out) + 2 hydrogencarbonate(out) + chloride(in). It catalyses the reaction Li(+)(in) + 2 hydrogencarbonate(in) + chloride(out) = Li(+)(out) + 2 hydrogencarbonate(out) + chloride(in). The enzyme catalyses Rb(+)(in) + 2 hydrogencarbonate(in) + chloride(out) = Rb(+)(out) + 2 hydrogencarbonate(out) + chloride(in). The catalysed reaction is Cs(+)(in) + 2 hydrogencarbonate(in) + chloride(out) = Cs(+)(out) + 2 hydrogencarbonate(out) + chloride(in). 4,4'-diisothiocyanatodihydrostilbene-2,2'- disulfonic acid (H2DIDS) potently inhibits chloride/hydrogencarbonate antiporter activity with 50% inhibition at about 5 uM. Completely inhibits chloride/hydrogencarbonate antiporter activity at 200 uM of 4,4'-diisothiocyano-trans-stilbene-2,2'-disulfonic acid (DIDS). Functionally, electroneutral Cl(-)/HCO3(-) antiporter that favors chloride ion entry and efflux of hydrogencarbonate and sodium ion across the basolateral membrane and may participate in salivary secretion. Also mediates Cl(-)/HCO3(-) exchange activity in the presence of K(+) as well as Cs(+), Li(+), and Rb(+). Does not contribute to Cl(-)/HCO3(-) exchanger in the apical membrane of the upper villous epithelium. This Rattus norvegicus (Rat) protein is Anion exchange protein 4.